We begin with the raw amino-acid sequence, 163 residues long: Nucleotide-binding protein YajQ (163 aa).

This sequence belongs to the YajQ family.

Nucleotide-binding protein. The chain is Nucleotide-binding protein YajQ from Escherichia coli (strain K12 / DH10B).